The chain runs to 76 residues: Spore germination protein-like protein YdzR (76 aa).

The protein belongs to the GerPA/GerPF family.

In Bacillus subtilis (strain 168), this protein is Spore germination protein-like protein YdzR (ydzR).